Consider the following 657-residue polypeptide: Matrix metalloproteinase-15 (657 aa).

Positions 1-36 (MGSDRSALGRPGCTGSCLSSRASLLPLLLVLLDCLG) are cleaved as a signal peptide. Residues 37 to 127 (HGTASKDAEV…KANLRRRRKR (91 aa)) constitute a propeptide that is removed on maturation. Positions 105–112 (PRCGVPDQ) match the Cysteine switch motif. A Zn(2+)-binding site is contributed by C107. Residues 128–614 (YTLTGKAWNN…MEEVVRTVNV (487 aa)) lie on the Extracellular side of the membrane. N146 is a glycosylation site (N-linked (GlcNAc...) asparagine). H255 is a binding site for Zn(2+). E256 is a catalytic residue. 2 residues coordinate Zn(2+): H259 and H265. Positions 295-365 (IQQLYGSPDG…ERPDQYGPNI (71 aa)) are disordered. The segment covering 328–337 (PRPPQPPHPG) has biased composition (pro residues). Hemopexin repeat units follow at residues 363–411 (PNIC…WRGL), 412–457 (PGNI…GTDI), 459–507 (YDRI…QGIP), and 508–555 (TSPK…FMGC). C366 and C555 are disulfide-bonded. N-linked (GlcNAc...) asparagine glycosylation occurs at N414. Residues 561 to 599 (PRSRWPDVARPPFNPNGGAEPEADGDSKEENAGDKDEGS) form a disordered region. Basic and acidic residues predominate over residues 585-599 (GDSKEENAGDKDEGS). The helical transmembrane segment at 615–635 (VMVLVPLLLLLCILGLAFALV) threads the bilayer. Topologically, residues 636–657 (QMQRKGAPRMLLYCKRSLQEWV) are cytoplasmic.

Belongs to the peptidase M10A family. It depends on Zn(2+) as a cofactor. Ca(2+) serves as cofactor. In terms of processing, the precursor is cleaved by a furin endopeptidase.

Its subcellular location is the membrane. Endopeptidase that degrades various components of the extracellular matrix. May activate progelatinase A. The protein is Matrix metalloproteinase-15 (Mmp15) of Mus musculus (Mouse).